We begin with the raw amino-acid sequence, 134 residues long: uncharacterized protein (134 aa).

3 helical membrane passes run 9 to 29, 49 to 69, and 107 to 127; these read PYFL…HGTA, MLLV…LGLF, and ALLY…ACAL.

This sequence belongs to the DoxX family.

Its subcellular location is the cell membrane. This is an uncharacterized protein from Haemophilus influenzae (strain ATCC 51907 / DSM 11121 / KW20 / Rd).